The primary structure comprises 58 residues: uncharacterized protein (58 aa).

A helical membrane pass occupies residues 12–32 (VMTLLITISILIVLAVLLVTI).

Its subcellular location is the cell membrane. This is an uncharacterized protein from Bacillus subtilis (strain 168).